A 325-amino-acid polypeptide reads, in one-letter code: Small ribosomal subunit protein uS3 (325 aa).

The 69-residue stretch at Ile38–Lys106 folds into the KH type-2 domain. Residues Glu217–Gly325 form a disordered region. A compositionally biased stretch (basic residues) spans Gln222–Pro232. The span at Thr285–Ala316 shows a compositional bias: low complexity.

This sequence belongs to the universal ribosomal protein uS3 family. Part of the 30S ribosomal subunit. Forms a tight complex with proteins S10 and S14.

Binds the lower part of the 30S subunit head. Binds mRNA in the 70S ribosome, positioning it for translation. The protein is Small ribosomal subunit protein uS3 of Parafrankia sp. (strain EAN1pec).